The sequence spans 550 residues: Chaperonin GroEL (550 aa).

ATP is bound by residues 30–33, K51, 87–91, G415, and D496; these read TLGP and DGTTT.

This sequence belongs to the chaperonin (HSP60) family. Forms a cylinder of 14 subunits composed of two heptameric rings stacked back-to-back. Interacts with the co-chaperonin GroES.

The protein resides in the cytoplasm. The catalysed reaction is ATP + H2O + a folded polypeptide = ADP + phosphate + an unfolded polypeptide.. Its function is as follows. Together with its co-chaperonin GroES, plays an essential role in assisting protein folding. The GroEL-GroES system forms a nano-cage that allows encapsulation of the non-native substrate proteins and provides a physical environment optimized to promote and accelerate protein folding. This chain is Chaperonin GroEL, found in Rickettsia bellii (strain OSU 85-389).